Here is a 525-residue protein sequence, read N- to C-terminus: NAD(P)H-quinone oxidoreductase chain 4-1 (525 aa).

14 consecutive transmembrane segments (helical) span residues 4–24, 37–57, 89–109, 111–131, 134–154, 167–187, 210–230, 241–261, 273–293, 309–329, 330–350, 385–405, 416–436, and 462–482; these read FPWL…IPII, LAVG…GFDL, LIIL…PVTL, PKLF…VFAV, ILLF…ILSI, FILY…TLAF, LLLY…FPLH, TAPA…YALL, AVFA…AAFT, ISHM…GMSG, AMLQ…MVGA, LALP…GFAT, IVVV…LSML, and VFII…PKLI.

This sequence belongs to the complex I subunit 4 family.

The protein localises to the cellular thylakoid membrane. It catalyses the reaction a plastoquinone + NADH + (n+1) H(+)(in) = a plastoquinol + NAD(+) + n H(+)(out). The catalysed reaction is a plastoquinone + NADPH + (n+1) H(+)(in) = a plastoquinol + NADP(+) + n H(+)(out). Its function is as follows. NDH-1 shuttles electrons from NAD(P)H, via FMN and iron-sulfur (Fe-S) centers, to quinones in the respiratory chain. The immediate electron acceptor for the enzyme in this species is believed to be plastoquinone. Couples the redox reaction to proton translocation (for every two electrons transferred, four hydrogen ions are translocated across the cytoplasmic membrane), and thus conserves the redox energy in a proton gradient. The chain is NAD(P)H-quinone oxidoreductase chain 4-1 (ndhD1) from Synechocystis sp. (strain ATCC 27184 / PCC 6803 / Kazusa).